The primary structure comprises 178 residues: Fluoride-specific ion channel FluC 2 (178 aa).

The next 4 helical transmembrane spans lie at 25 to 45 (PDIH…GTAI), 63 to 83 (FVAN…LAGA), 97 to 117 (GLGM…LEGF), and 129 to 149 (IAYL…GVWA). Gly-104 and Ser-107 together coordinate Na(+).

Belongs to the fluoride channel Fluc/FEX (TC 1.A.43) family.

The protein localises to the cell membrane. The enzyme catalyses fluoride(in) = fluoride(out). Its activity is regulated as follows. Na(+) is not transported, but it plays an essential structural role and its presence is essential for fluoride channel function. Functionally, fluoride-specific ion channel. Important for reducing fluoride concentration in the cell, thus reducing its toxicity. The chain is Fluoride-specific ion channel FluC 2 from Bifidobacterium longum (strain NCC 2705).